Consider the following 1100-residue polypeptide: Serine/threonine/tyrosine-interacting-like protein 2 (1100 aa).

Positions 1 to 12 are enriched in polar residues; sequence MASSVEDQQLQQ. The tract at residues 1–21 is disordered; the sequence is MASSVEDQQLQQEEAESVKDV. A Tyrosine-protein phosphatase domain is found at 141-289; that stretch reads SPVDEVWPNV…LRQLNETLME (149 aa). The segment covering 356-374 has biased composition (polar residues); the sequence is CGSQQPNMQQPADQPSLPG. Disordered stretches follow at residues 356–383, 411–436, 479–504, 542–561, 575–615, 667–686, 888–1060, and 1075–1100; these read CGSQQPNMQQPADQPSLPGQTREDEDGD, EDEDDGEDKTQRAVRPDDLESVTSED, AAARHRLQDQDTSSETQQKKIDDDVQ, KENAENGEQSEAEPAAAPDL, KQQK…ERSR, VLSGRSTRSLPPAVLETPAP, CEKP…DEEI, and VAEEMEDDEVLTAWRKQEESKSHDHK. Residues 418-428 are compositionally biased toward basic and acidic residues; that stretch reads DKTQRAVRPDD. Residues 580-615 show a composition bias toward basic and acidic residues; it reads HGGEENKEEILQMSRGEDTATARRRQRREEVLERSR. Over residues 667-676 the composition is skewed to low complexity; that stretch reads VLSGRSTRSL. The span at 888 to 898 shows a compositional bias: basic and acidic residues; sequence CEKPKPKRDYG. Polar residues-rich tracts occupy residues 907–916, 994–1013, and 1029–1041; these read ASANNPTSSI, SYSSRRSPSFNGLSESTSFA, and FQNHSIKQKSSVY. Over residues 1089-1100 the composition is skewed to basic and acidic residues; that stretch reads RKQEESKSHDHK.

The protein belongs to the protein-tyrosine phosphatase family. Non-receptor class dual specificity subfamily. Expressed in muscle fibers in a regular striated pattern (at protein level).

The protein resides in the cytoplasm. It localises to the myofibril. It is found in the sarcomere. Functionally, required for myofiber maturation. This Danio rerio (Zebrafish) protein is Serine/threonine/tyrosine-interacting-like protein 2 (styxl2).